Reading from the N-terminus, the 688-residue chain is Protein STE12 (688 aa).

A Phosphothreonine modification is found at Thr-29. The DNA-binding element occupies 57-167; that stretch reads NQIIRRYYLN…SVAHDKLFAD (111 aa). Disordered stretches follow at residues 177-199, 211-239, and 285-305; these read SLNQPSTTKPVNEPALSFSYDSS, HLDSRRPSSTTKSDNSPPKLESENFKDNE, and LTEETPHDLPKNTAKGRDEED. Residues Ser-214 and Ser-226 each carry the phosphoserine modification. Positions 217-226 are enriched in polar residues; sequence PSSTTKSDNS. Basic and acidic residues-rich tracts occupy residues 230–239 and 288–302; these read LESENFKDNE and ETPHDLPKNTAKGRD. Position 289 is a phosphothreonine (Thr-289). Ser-400 carries the post-translational modification Phosphoserine. Disordered regions lie at residues 587-610 and 630-688; these read GMKSSQGNVPTGNKQSVGKSAKIS and TKAR…PDAT. A compositionally biased stretch (polar residues) spans 588–604; sequence MKSSQGNVPTGNKQSVG. 2 stretches are compositionally biased toward basic and acidic residues: residues 640–649 and 672–688; these read DSAHPDKNKE and LEVDTNRRSDKNLPDAT.

It belongs to the STE12 transcription factor family. In terms of assembly, interacts with mating-type protein ALPHA1. Phosphorylated by the STE7, STE11 and STE20 kinases.

The protein resides in the nucleus. Functionally, binds to the DNA sequence mediating pheromone induction (called the pheromone response element = PRE) which is found in the upstream control region of several a-, alpha- and haploid-specific genes. Involved in mating of haploids and in pseudohyphae formation in diploids. In Saccharomyces cerevisiae (strain ATCC 204508 / S288c) (Baker's yeast), this protein is Protein STE12 (STE12).